Here is a 141-residue protein sequence, read N- to C-terminus: Pyrophosphate-energized proton pump (141 aa).

3 consecutive transmembrane segments (helical) span residues 11–31 (GLIATGLLSIVGLGVANTLTV), 46–66 (GTNLFVCGLIGLIVTGLIVVI), and 121–141 (LAGLFGTAIAVTAMLGIAGMI).

The protein belongs to the H(+)-translocating pyrophosphatase (TC 3.A.10) family. Homodimer. Requires Mg(2+) as cofactor.

The protein resides in the cell inner membrane. It carries out the reaction diphosphate + H2O + H(+)(in) = 2 phosphate + 2 H(+)(out). In terms of biological role, proton pump that utilizes the energy of pyrophosphate hydrolysis as the driving force for proton movement across the membrane. Generates a proton motive force. The polypeptide is Pyrophosphate-energized proton pump (hppA) (Anaplasma marginale).